Reading from the N-terminus, the 515-residue chain is Alpha,alpha-trehalose-phosphate synthase [UDP-forming] 1 (515 aa).

Positions 97 and 151 each coordinate D-glucose 6-phosphate. Positions 287 and 292 each coordinate UDP. UDP-alpha-D-glucose contacts are provided by Arg-287 and Lys-292. Arg-325 is a binding site for D-glucose 6-phosphate. UDP is bound by residues Val-364 and 390 to 394 (LVAYE). A UDP-alpha-D-glucose-binding site is contributed by 386–394 (DGMNLVAYE). A disordered region spans residues 483–515 (GKFQSRKAKLPESADAEKPMNGSGESEESQTTQ). Positions 491–500 (KLPESADAEK) are enriched in basic and acidic residues.

It belongs to the glycosyltransferase 20 family.

It carries out the reaction D-glucose 6-phosphate + UDP-alpha-D-glucose = alpha,alpha-trehalose 6-phosphate + UDP + H(+). It participates in carbohydrate biosynthesis. In terms of biological role, synthase catalytic subunit of the trehalose synthase complex that catalyzes the production of trehalose from glucose-6-phosphate and UDP-alpha-D-glucose in a two step process. The disaccharide trehalose serves as a storage carbohydrate that is mobilized during conidial germination. Regulates the level of trehalose as a protectant for cell integrity during thermal and oxidative stress. This Aspergillus fumigatus (strain ATCC MYA-4609 / CBS 101355 / FGSC A1100 / Af293) (Neosartorya fumigata) protein is Alpha,alpha-trehalose-phosphate synthase [UDP-forming] 1.